A 139-amino-acid polypeptide reads, in one-letter code: Large ribosomal subunit protein uL16 (139 aa).

It belongs to the universal ribosomal protein uL16 family. In terms of assembly, part of the 50S ribosomal subunit.

In terms of biological role, binds 23S rRNA and is also seen to make contacts with the A and possibly P site tRNAs. In Mycoplasma pneumoniae (strain ATCC 29342 / M129 / Subtype 1) (Mycoplasmoides pneumoniae), this protein is Large ribosomal subunit protein uL16.